The primary structure comprises 105 residues: uncharacterized protein (105 aa).

The next 2 membrane-spanning stretches (helical) occupy residues 7–26 (VLSVISVFSAAALVYRWLSL) and 30–52 (VDMTVIFFATLLIASLTLLLISI).

Its subcellular location is the cell membrane. This is an uncharacterized protein from Archaeoglobus fulgidus (strain ATCC 49558 / DSM 4304 / JCM 9628 / NBRC 100126 / VC-16).